Here is a 37-residue protein sequence, read N- to C-terminus: Cytochrome b6-f complex subunit 5 (37 aa).

A helical membrane pass occupies residues 5 to 25 (LLCGIVLGLIPVTLAGLFFAA).

It belongs to the PetG family. In terms of assembly, the 4 large subunits of the cytochrome b6-f complex are cytochrome b6, subunit IV (17 kDa polypeptide, PetD), cytochrome f and the Rieske protein, while the 4 small subunits are PetG, PetL, PetM and PetN. The complex functions as a dimer.

The protein localises to the cellular thylakoid membrane. Component of the cytochrome b6-f complex, which mediates electron transfer between photosystem II (PSII) and photosystem I (PSI), cyclic electron flow around PSI, and state transitions. PetG is required for either the stability or assembly of the cytochrome b6-f complex. The sequence is that of Cytochrome b6-f complex subunit 5 from Thermosynechococcus vestitus (strain NIES-2133 / IAM M-273 / BP-1).